An 851-amino-acid chain; its full sequence is Phosphatidate phosphatase LPIN3 (851 aa).

Residues 1–108 (MNYVGQLAET…VPPGLCTSPI (108 aa)) are N-LIP. 2 disordered regions span residues 114 to 385 (SGFP…YLDD) and 400 to 432 (QSDSGLGARRWSEPSSQKSLRDPNPEHEPEPTL). Over residues 140 to 151 (GRRKRRRRRKPK) the composition is skewed to basic residues. The Nuclear localization signal signature appears at 141 to 148 (RRKRRRRR). At threonine 159 the chain carries Phosphothreonine. A phosphoserine mark is found at serine 161, serine 162, and serine 224. A compositionally biased stretch (low complexity) spans 268 to 286 (GRAGATSPPRGGPSTPSTS). A compositionally biased stretch (basic and acidic residues) spans 418–429 (SLRDPNPEHEPE). Serine 463 is subject to Phosphoserine. Basic and acidic residues predominate over residues 542 to 559 (SAQKEKTAAKEQQGEKTE). Residues 542 to 591 (SAQKEKTAAKEQQGEKTEVLSSDDDAPDSPVILEIPSLPPSTPPSTPTYK) are disordered. Positions 578-587 (SLPPSTPPST) are enriched in pro residues. The segment at 590–792 (YKKSLRLSSD…RIFTVNPRGE (203 aa)) is C-LIP. The DXDXT motif signature appears at 644–648 (DIDGT). Positions 655-659 (LGHIL) match the LXXIL motif motif.

This sequence belongs to the lipin family. Mg(2+) serves as cofactor. As to expression, significant expression in intestine and other regions of the gastrointestinal tract.

Its subcellular location is the nucleus. The catalysed reaction is a 1,2-diacyl-sn-glycero-3-phosphate + H2O = a 1,2-diacyl-sn-glycerol + phosphate. Inhibited by N-ethylmaleimide. Functionally, magnesium-dependent phosphatidate phosphatase enzyme which catalyzes the conversion of phosphatidic acid to diacylglycerol during triglyceride, phosphatidylcholine and phosphatidylethanolamine biosynthesis therefore regulates fatty acid metabolism. This Homo sapiens (Human) protein is Phosphatidate phosphatase LPIN3.